The chain runs to 212 residues: Protein HP-25 homolog 1 (212 aa).

Residues 1–34 form the signal peptide; it reads MPGGRRRVGSMNIAGFWILAQFVLLLVANVKSSA. Residues 36–66 are disordered; sequence SELCGPRGARGPPGLSGLPGPPGYTGPIGMP. Residues 40 to 53 show a composition bias toward low complexity; the sequence is GPRGARGPPGLSGL. Residues 40–76 form the Collagen-like domain; sequence GPRGARGPPGLSGLPGPPGYTGPIGMPGLTGRPGLPG. The C1q domain occupies 82 to 212; sequence PPLPQSAFSV…VFYGFLLNGN (131 aa). Asparagine 125 carries an N-linked (GlcNAc...) asparagine glycan.

The protein resides in the secreted. In Bos taurus (Bovine), this protein is Protein HP-25 homolog 1.